We begin with the raw amino-acid sequence, 356 residues long: 1-deoxy-D-xylulose 5-phosphate reductoisomerase (356 aa).

Positions 7, 8, 9, 10, 31, 33, and 111 each coordinate NADPH. Residue K112 coordinates 1-deoxy-D-xylulose 5-phosphate. Residue E113 coordinates NADPH. D131 lines the Mn(2+) pocket. 1-deoxy-D-xylulose 5-phosphate-binding residues include S132, E133, S155, and H178. Residue E133 participates in Mn(2+) binding. Position 184 (G184) interacts with NADPH. 1-deoxy-D-xylulose 5-phosphate is bound by residues S191, N196, K197, and E200. E200 contributes to the Mn(2+) binding site.

It belongs to the DXR family. The cofactor is Mg(2+). Mn(2+) is required as a cofactor.

It carries out the reaction 2-C-methyl-D-erythritol 4-phosphate + NADP(+) = 1-deoxy-D-xylulose 5-phosphate + NADPH + H(+). It participates in isoprenoid biosynthesis; isopentenyl diphosphate biosynthesis via DXP pathway; isopentenyl diphosphate from 1-deoxy-D-xylulose 5-phosphate: step 1/6. In terms of biological role, catalyzes the NADPH-dependent rearrangement and reduction of 1-deoxy-D-xylulose-5-phosphate (DXP) to 2-C-methyl-D-erythritol 4-phosphate (MEP). In Campylobacter jejuni subsp. jejuni serotype O:23/36 (strain 81-176), this protein is 1-deoxy-D-xylulose 5-phosphate reductoisomerase.